Consider the following 618-residue polypeptide: Proline--tRNA ligase (618 aa).

This sequence belongs to the class-II aminoacyl-tRNA synthetase family. ProS type 1 subfamily. In terms of assembly, homodimer.

Its subcellular location is the cytoplasm. The catalysed reaction is tRNA(Pro) + L-proline + ATP = L-prolyl-tRNA(Pro) + AMP + diphosphate. Catalyzes the attachment of proline to tRNA(Pro) in a two-step reaction: proline is first activated by ATP to form Pro-AMP and then transferred to the acceptor end of tRNA(Pro). As ProRS can inadvertently accommodate and process non-cognate amino acids such as alanine and cysteine, to avoid such errors it has two additional distinct editing activities against alanine. One activity is designated as 'pretransfer' editing and involves the tRNA(Pro)-independent hydrolysis of activated Ala-AMP. The other activity is designated 'posttransfer' editing and involves deacylation of mischarged Ala-tRNA(Pro). The misacylated Cys-tRNA(Pro) is not edited by ProRS. This Streptococcus pyogenes serotype M2 (strain MGAS10270) protein is Proline--tRNA ligase.